Here is a 123-residue protein sequence, read N- to C-terminus: Small ribosomal subunit protein uS13 (123 aa).

The tract at residues Gly95–Lys123 is disordered.

This sequence belongs to the universal ribosomal protein uS13 family. As to quaternary structure, part of the 30S ribosomal subunit. Forms a loose heterodimer with protein S19. Forms two bridges to the 50S subunit in the 70S ribosome.

In terms of biological role, located at the top of the head of the 30S subunit, it contacts several helices of the 16S rRNA. In the 70S ribosome it contacts the 23S rRNA (bridge B1a) and protein L5 of the 50S subunit (bridge B1b), connecting the 2 subunits; these bridges are implicated in subunit movement. Contacts the tRNAs in the A and P-sites. This Desulfitobacterium hafniense (strain DSM 10664 / DCB-2) protein is Small ribosomal subunit protein uS13.